A 260-amino-acid chain; its full sequence is Taurine import ATP-binding protein TauB (260 aa).

Positions 6 to 235 (AQQVSVVYAS…RYAHGEPMRS (230 aa)) constitute an ABC transporter domain. 40–47 (GASGCGKS) contributes to the ATP binding site.

Belongs to the ABC transporter superfamily. Taurine importer (TC 3.A.1.17.1) family. As to quaternary structure, the complex is composed of two ATP-binding proteins (TauB), two transmembrane proteins (TauC) and a solute-binding protein (TauA).

It is found in the cell inner membrane. The enzyme catalyses taurine(out) + ATP + H2O = taurine(in) + ADP + phosphate + H(+). Part of the ABC transporter complex TauABC involved in taurine import. Responsible for energy coupling to the transport system. The polypeptide is Taurine import ATP-binding protein TauB (Burkholderia pseudomallei (strain 1710b)).